Here is a 412-residue protein sequence, read N- to C-terminus: uncharacterized protein (412 aa).

His49 contacts Zn(2+). Glu52 acts as the Proton acceptor in catalysis. Zn(2+) is bound by residues His53 and Glu129.

The protein belongs to the peptidase M16 family. Requires Zn(2+) as cofactor.

This is an uncharacterized protein from Rickettsia bellii (strain RML369-C).